Reading from the N-terminus, the 237-residue chain is UPF0280 protein Mbur_0309 (237 aa).

The protein belongs to the UPF0280 family.

The polypeptide is UPF0280 protein Mbur_0309 (Methanococcoides burtonii (strain DSM 6242 / NBRC 107633 / OCM 468 / ACE-M)).